Here is a 295-residue protein sequence, read N- to C-terminus: Protease HtpX (295 aa).

2 consecutive transmembrane segments (helical) span residues 4 to 24 (IVLF…ILSL) and 34 to 54 (GLMI…LLMS). Position 139 (H139) interacts with Zn(2+). The active site involves E140. H143 serves as a coordination point for Zn(2+). 2 helical membrane passes run 147 to 167 (GDMV…IFIS) and 194 to 214 (IVYM…ASII). Residue E223 participates in Zn(2+) binding.

It belongs to the peptidase M48B family. It depends on Zn(2+) as a cofactor.

The protein resides in the cell inner membrane. The sequence is that of Protease HtpX from Photorhabdus laumondii subsp. laumondii (strain DSM 15139 / CIP 105565 / TT01) (Photorhabdus luminescens subsp. laumondii).